We begin with the raw amino-acid sequence, 257 residues long: Type III pantothenate kinase (257 aa).

Residue D6–V13 coordinates ATP. Substrate is bound by residues Y100 and G107–R110. The active-site Proton acceptor is the D109. Residue D129 coordinates K(+). Residue T132 participates in ATP binding. T184 contributes to the substrate binding site.

The protein belongs to the type III pantothenate kinase family. As to quaternary structure, homodimer. It depends on NH4(+) as a cofactor. Requires K(+) as cofactor.

The protein resides in the cytoplasm. It catalyses the reaction (R)-pantothenate + ATP = (R)-4'-phosphopantothenate + ADP + H(+). It participates in cofactor biosynthesis; coenzyme A biosynthesis; CoA from (R)-pantothenate: step 1/5. Its function is as follows. Catalyzes the phosphorylation of pantothenate (Pan), the first step in CoA biosynthesis. The chain is Type III pantothenate kinase from Clostridium botulinum (strain Alaska E43 / Type E3).